The following is an 85-amino-acid chain: Putative membrane protein insertion efficiency factor (85 aa).

This sequence belongs to the UPF0161 family.

Its subcellular location is the cell inner membrane. In terms of biological role, could be involved in insertion of integral membrane proteins into the membrane. This is Putative membrane protein insertion efficiency factor from Serratia proteamaculans (strain 568).